We begin with the raw amino-acid sequence, 296 residues long: Claudin-23 (296 aa).

The Cytoplasmic segment spans residues 1–2 (MR). A helical transmembrane segment spans residues 3 to 23 (TPVVMTLGMVLTPCGLLLNLV). Residues 24–81 (STLAPGWRLVKGFLDQPVDVVLYQGLWDICREQSSRERECGQPDEWNYFQTQPVQVAR) are Extracellular-facing. The helical transmembrane segment at 82–102 (GLMITSLATTALGLLLASLGV) threads the bilayer. Over 103–111 (RCWQDEPHY) the chain is Cytoplasmic. A helical transmembrane segment spans residues 112-132 (GLAGLSGVVFFVAGLFSLIPV). Topologically, residues 133–160 (SWYNHFLSDPDVLAAPSSPVTVQVSYSL) are extracellular. Residues 161–181 (VLGYLGSCLLLLGGFSLALSF) form a helical membrane-spanning segment. Residues 182–296 (APWCEERCRR…QNSLPCDSDL (115 aa)) lie on the Cytoplasmic side of the membrane. The disordered stretch occupies residues 224 to 296 (YSDGQHRPPP…QNSLPCDSDL (73 aa)). Low complexity predominate over residues 273 to 284 (TSQGGSSSRSTR). A compositionally biased stretch (polar residues) spans 285 to 296 (PCQNSLPCDSDL).

This sequence belongs to the claudin family.

The protein resides in the cell junction. It localises to the tight junction. Its subcellular location is the cell membrane. Its function is as follows. Plays a major role in tight junction-specific obliteration of the intercellular space, through calcium-independent cell-adhesion activity. This chain is Claudin-23 (Cldn23), found in Mus musculus (Mouse).